The following is a 227-amino-acid chain: Uridylate kinase (227 aa).

Residue G11 to S12 coordinates ATP. G45 is a binding site for UMP. ATP-binding residues include G46 and R50. UMP contacts are provided by residues D67 and T114–T120. Positions 140, 146, and 149 each coordinate ATP.

Belongs to the UMP kinase family. As to quaternary structure, homohexamer.

The protein localises to the cytoplasm. The catalysed reaction is UMP + ATP = UDP + ADP. It participates in pyrimidine metabolism; CTP biosynthesis via de novo pathway; UDP from UMP (UMPK route): step 1/1. Inhibited by UTP. In terms of biological role, catalyzes the reversible phosphorylation of UMP to UDP. The polypeptide is Uridylate kinase (Thermoplasma volcanium (strain ATCC 51530 / DSM 4299 / JCM 9571 / NBRC 15438 / GSS1)).